Consider the following 217-residue polypeptide: UPF0711 protein C18orf21 homolog (217 aa).

At Ser126 the chain carries Phosphoserine. Phosphothreonine occurs at positions 130 and 139. Positions Ala131 to Phe190 are disordered. Positions Asn149–Asn182 are enriched in polar residues.

It belongs to the UPF0711 family.

The chain is UPF0711 protein C18orf21 homolog from Mus musculus (Mouse).